A 66-amino-acid chain; its full sequence is Large ribosomal subunit protein uL29 (66 aa).

Belongs to the universal ribosomal protein uL29 family.

The polypeptide is Large ribosomal subunit protein uL29 (Rhizobium etli (strain CIAT 652)).